A 524-amino-acid polypeptide reads, in one-letter code: Leucine-rich repeat-containing protein 1 (524 aa).

17 LRR repeats span residues 11–34 (NRHV…IYRY), 35–58 (ARSL…FFQL), 60–81 (KLRK…IANF), 83–105 (QLVE…SFCK), 107–126 (LQVA…SFPE), 127–149 (LQNL…NIGN), 150–172 (LYNL…SLTQ), 173–196 (LRRL…IGAL), 198–218 (HLKD…EIGN), 219–242 (LKNL…ISGL), 244–264 (SLTD…GIGK), 265–288 (LKKL…VGEC), 290–310 (SLTE…SIGK), 311–334 (LKKL…IGGC), 336–356 (SLTV…EVSQ), 357–380 (ATEL…LTAL), and 382–405 (LKAL…TDYT). Thr480 bears the Phosphothreonine mark. A coiled-coil region spans residues 484 to 512 (GELKHMKKTVENLRNDMNAAKGLDSNKNE).

As to quaternary structure, interacts with DLG1 and DLG4. May form a complex with DLG1 and ERBIN, where interaction between LRRC1 and ERBIN is indirect. Expressed strongly in testis and placenta, followed by heart, lung, kidney, thyroid, trachea, colon, prostate and pancreas.

It is found in the cytoplasm. The protein localises to the membrane. This is Leucine-rich repeat-containing protein 1 (LRRC1) from Homo sapiens (Human).